The chain runs to 638 residues: MPIITLPDGSKKVFEKSVTILEIAQSIGAGLAKATIAGKVNDVLLDATIPINSDSKVVIITSKDKEGIEIIRHSFAHLIGHAVKQIYSDIKMAIGPVIEDGFYYDIFSEYRFTPEDLIKIENRINKLIKTNYDVEILQVSKKEAIKTFKERDETFKLRIIEDIPEEGLINLYKHEEYIDMCRGPHVPNTRHLRHFKLLKLSGSYWRGNSENESLQRIYGTAWAKEKELNDYLKRIEEAEKRDHRKLGKKHSLFHIQEESPGMIFWHPNGWTIYQVLEKYIREILKKNDYLEIKTPQAVDKSLWEKSGHWEKFRDDMFTTASENRTYAIKPMNCPCHIQVFNQGLKSYKDLPIRLAEFGSCHRNEPSGALHGLMRVRNFTQDDAHIFCTEEQIQEEVSTFIDLVFEVYKTFGFDEIIIKLSTRPKKKVGSEEIWDKSEEALTKALDNKNLKWELQPGEGAFYGPKIEFSLKDCLNRVWQCGTIQVDFSMPIRLDATYVDIDNEKRNPVMLHRAILGSFERFIGILIEQYEAKFPIWLAPYQLTLLSITDRNIEKCLKFNELLINNGYRSTVDIRNEKIGYKIREATLERVPLIAVIGDKEEEIDSVSLRALDGRNLGIFNLPNLCKLMDGLIEKRGRTE.

Residues 1-61 (MPIITLPDGS…NSDSKVVIIT (61 aa)) enclose the TGS domain. Residues 242-533 (DHRKLGKKHS…LIEQYEAKFP (292 aa)) are catalytic. Positions 333, 384, and 510 each coordinate Zn(2+).

Belongs to the class-II aminoacyl-tRNA synthetase family. In terms of assembly, homodimer. It depends on Zn(2+) as a cofactor.

Its subcellular location is the cytoplasm. The catalysed reaction is tRNA(Thr) + L-threonine + ATP = L-threonyl-tRNA(Thr) + AMP + diphosphate + H(+). Its function is as follows. Catalyzes the attachment of threonine to tRNA(Thr) in a two-step reaction: L-threonine is first activated by ATP to form Thr-AMP and then transferred to the acceptor end of tRNA(Thr). Also edits incorrectly charged L-seryl-tRNA(Thr). This chain is Threonine--tRNA ligase, found in Prochlorococcus marinus (strain MIT 9215).